Here is a 257-residue protein sequence, read N- to C-terminus: Major prion protein (257 aa).

The N-terminal stretch at 1 to 24 (MVKSHIGSWLLVLFVATWSDIGFC) is a signal peptide. Residues 25-41 (KKRPKPGGGWNTGGSRY) form an interaction with ADGRG6 region. Residues 25-234 (KKRPKPGGGW…ESEAYYQRGA (210 aa)) are interaction with GRB2, ERI3 and SYN1. Residues 27–114 (RPKPGGGWNT…KPSKPKTNMK (88 aa)) are disordered. 5 repeat units span residues 54 to 62 (PQGGGGWGQ), 63 to 70 (PHGGGWGQ), 71 to 78 (PHGGGWGQ), 79 to 86 (PHGGGWGQ), and 87 to 95 (PHGGGGWGQ). The tract at residues 54-95 (PQGGGGWGQPHGGGWGQPHGGGWGQPHGGGWGQPHGGGGWGQ) is 5 X 8 AA tandem repeats of P-H-G-G-G-W-G-Q. The span at 55 to 101 (QGGGGWGQPHGGGWGQPHGGGWGQPHGGGWGQPHGGGGWGQGGGSHG) shows a compositional bias: gly residues. Residues histidine 64, glycine 65, glycine 66, histidine 72, glycine 73, glycine 74, histidine 80, glycine 81, glycine 82, histidine 88, glycine 90, and glycine 91 each contribute to the Cu(2+) site. Residues cysteine 183 and cysteine 218 are joined by a disulfide bond. 2 N-linked (GlcNAc...) asparagine glycosylation sites follow: asparagine 185 and asparagine 201. Alanine 234 carries GPI-anchor amidated alanine lipidation. Residues 235–257 (SAILFSPPPVILLISLLILLIVG) constitute a propeptide, removed in mature form.

The protein belongs to the prion family. Monomer and homodimer. Has a tendency to aggregate into amyloid fibrils containing a cross-beta spine, formed by a steric zipper of superposed beta-strands. Soluble oligomers may represent an intermediate stage on the path to fibril formation. Copper binding may promote oligomerization. Interacts with GRB2, APP, ERI3/PRNPIP and SYN1. Mislocalized cytosolically exposed PrP interacts with MGRN1; this interaction alters MGRN1 subcellular location and causes lysosomal enlargement. Interacts with APP. Interacts with KIAA1191. Interacts with ADGRG6.

It is found in the cell membrane. The protein localises to the golgi apparatus. In terms of biological role, its primary physiological function is unclear. May play a role in neuronal development and synaptic plasticity. May be required for neuronal myelin sheath maintenance. May promote myelin homeostasis through acting as an agonist for ADGRG6 receptor. May play a role in iron uptake and iron homeostasis. Soluble oligomers are toxic to cultured neuroblastoma cells and induce apoptosis (in vitro). Association with GPC1 (via its heparan sulfate chains) targets PRNP to lipid rafts. Also provides Cu(2+) or Zn(2+) for the ascorbate-mediated GPC1 deaminase degradation of its heparan sulfate side chains. This chain is Major prion protein (PRNP), found in Neovison vison (American mink).